Reading from the N-terminus, the 335-residue chain is Zinc transporter ZIP11 (335 aa).

7 consecutive transmembrane segments (helical) span residues 12–32 (LLGT…VFIF), 44–64 (LGFA…APAV), 72–92 (GFGA…AAFV), 187–207 (IALL…AVGV), 256–278 (FWYG…FAVV), 283–300 (VLPY…YVVM), and 315–335 (LASW…VGLG).

It belongs to the ZIP transporter (TC 2.A.5) family.

It is found in the cell membrane. The protein localises to the nucleus. It localises to the cytoplasm. Its subcellular location is the golgi apparatus. It catalyses the reaction Zn(2+)(in) = Zn(2+)(out). It carries out the reaction Cu(2+)(in) = Cu(2+)(out). In terms of biological role, zinc importer that regulates cytosolic zinc concentrations either via zinc influx from the extracellular compartment or efflux from intracellular organelles such as Golgi apparatus. May transport copper ions as well. The transport mechanism remains to be elucidated. The sequence is that of Zinc transporter ZIP11 (Slc39a11) from Rattus norvegicus (Rat).